Reading from the N-terminus, the 104-residue chain is L-rhamnose mutarotase (104 aa).

Y18 contributes to the substrate binding site. The Proton donor role is filled by H22. Residues Y41 and 76–77 contribute to the substrate site; that span reads WW.

Belongs to the rhamnose mutarotase family. In terms of assembly, homodimer.

Its subcellular location is the cytoplasm. It carries out the reaction alpha-L-rhamnose = beta-L-rhamnose. The protein operates within carbohydrate metabolism; L-rhamnose metabolism. Involved in the anomeric conversion of L-rhamnose. This Tolumonas auensis (strain DSM 9187 / NBRC 110442 / TA 4) protein is L-rhamnose mutarotase.